Here is a 636-residue protein sequence, read N- to C-terminus: Beta-galactosidase-1-like protein 2 (636 aa).

A signal peptide spans 1-32 (MTTWSLRRRPARTLGLLLLVVLGFLVLRRLDW). Glutamate 201 acts as the Proton donor in catalysis. The active-site Nucleophile is the glutamate 277.

This sequence belongs to the glycosyl hydrolase 35 family.

The protein resides in the secreted. In Homo sapiens (Human), this protein is Beta-galactosidase-1-like protein 2 (GLB1L2).